The following is an 843-amino-acid chain: Protein translocase subunit SecA (843 aa).

ATP contacts are provided by residues glutamine 85, 103–107 (GEGKT), and aspartate 490. A disordered region spans residues 799 to 834 (KNAVENRSDDSLPKQPVKAEPRVGRNDPCPCGSGKK). Basic and acidic residues predominate over residues 802 to 823 (VENRSDDSLPKQPVKAEPRVGR). Zn(2+)-binding residues include cysteine 827, cysteine 829, cysteine 838, and cysteine 839.

The protein belongs to the SecA family. In terms of assembly, monomer and homodimer. Part of the essential Sec protein translocation apparatus which comprises SecA, SecYEG and auxiliary proteins SecDF. Other proteins may also be involved. Zn(2+) serves as cofactor.

It is found in the cell membrane. It localises to the cytoplasm. It carries out the reaction ATP + H2O + cellular proteinSide 1 = ADP + phosphate + cellular proteinSide 2.. Its function is as follows. Part of the Sec protein translocase complex. Interacts with the SecYEG preprotein conducting channel. Has a central role in coupling the hydrolysis of ATP to the transfer of proteins into and across the cell membrane, serving as an ATP-driven molecular motor driving the stepwise translocation of polypeptide chains across the membrane. The protein is Protein translocase subunit SecA of Heliobacterium modesticaldum (strain ATCC 51547 / Ice1).